A 105-amino-acid chain; its full sequence is Large ribosomal subunit protein uL24 (105 aa).

The protein belongs to the universal ribosomal protein uL24 family. Part of the 50S ribosomal subunit.

In terms of biological role, one of two assembly initiator proteins, it binds directly to the 5'-end of the 23S rRNA, where it nucleates assembly of the 50S subunit. Functionally, one of the proteins that surrounds the polypeptide exit tunnel on the outside of the subunit. The chain is Large ribosomal subunit protein uL24 from Halorhodospira halophila (strain DSM 244 / SL1) (Ectothiorhodospira halophila (strain DSM 244 / SL1)).